Here is a 195-residue protein sequence, read N- to C-terminus: Molybdenum cofactor guanylyltransferase (195 aa).

Residues 10–12 (LAG), Lys-23, Asn-51, Asp-69, and Asp-99 contribute to the GTP site. Asp-99 is a Mg(2+) binding site.

It belongs to the MobA family. Monomer. Mg(2+) serves as cofactor.

Its subcellular location is the cytoplasm. The enzyme catalyses Mo-molybdopterin + GTP + H(+) = Mo-molybdopterin guanine dinucleotide + diphosphate. Its function is as follows. Transfers a GMP moiety from GTP to Mo-molybdopterin (Mo-MPT) cofactor (Moco or molybdenum cofactor) to form Mo-molybdopterin guanine dinucleotide (Mo-MGD) cofactor. The polypeptide is Molybdenum cofactor guanylyltransferase (Yersinia pestis bv. Antiqua (strain Antiqua)).